We begin with the raw amino-acid sequence, 377 residues long: MENLSSACTHFSFDLFRKINENNATGNVFFSPISISTALAMVLLGARGNTAQQISRILHFDAVKDLHSNFQTLNAEINKKNVSSYALNLANRLFGEKSFKFLPDFLSSVKKQYNADLGTVDFISAAEDARKEINTWVSEQTKGKIPEVLSAGAVNSFTKLVLVNAIYFKGDWAKKFKAEHTKDMPFQLNKKEQKTVKMMYQMEKLPFNYIPEINCRVLELPYVDYELSMVIVLPDNINDDTTGLQQLEKELSLEKINEWTENMMPIDVHVHLPKFKLEDSYKLKSQLAGMGMADLFEAGSADLSGMSGSNDLYLSEVIHKSFVEVNEEGTEAAAASAGIAMMCLMREEEFNANHPFLFFIRHNATKSILFFGRYSSP.

M1 bears the N-acetylmethionine mark.

This sequence belongs to the serpin family. Ov-serpin subfamily.

The protein resides in the cytoplasm. Functionally, regulates the activity of the neutrophil proteases. This Xenopus tropicalis (Western clawed frog) protein is Leukocyte elastase inhibitor (serpinb1).